The following is a 468-amino-acid chain: Chromatin assembly factor 1 subunit B (468 aa).

WD repeat units follow at residues 11–52 (HDSQ…NGQN), 69–108 (HHEQAINVIRFNSKGDVLASAGDDGQVLLWKQEDPNTQQE), 143–182 (TAAAEIYDLAWSPDNRNIVVACMDNSIRLFDVGAGMLVCG), 185–224 (DHGHYVQGVAWDPLNQFILSQSADRSLHVYGVILSSAGVV), and 371–413 (IHYS…SRIE).

Belongs to the WD repeat HIR1 family. Component of chromatin assembly factor 1 (CAF-1), composed of MSI1/p50, CAC2/p60 and CAC1/p90. Interacts with RTT106.

It localises to the nucleus. Acts as a component of the histone chaperone complex chromatin assembly factor 1 (CAF-1), which assembles histone octamers onto replicating DNA. It performs the first step of the nucleosome assembly process, bringing newly synthesized histones H3 and H4 to replicating DNA; histones H2A/H2B can bind to this chromatin precursor subsequent to DNA replication to complete the histone octamer. Plays a role in the maintenance of heterochromatin. This chain is Chromatin assembly factor 1 subunit B (CAC2), found in Saccharomyces cerevisiae (strain ATCC 204508 / S288c) (Baker's yeast).